A 396-amino-acid polypeptide reads, in one-letter code: Putative glycosyltransferase HOC1 (396 aa).

At 2 to 13 (AKTTKRASSFRR) the chain is on the cytoplasmic side. The chain crosses the membrane as a helical; Signal-anchor for type II membrane protein span at residues 14–34 (LMIFAIIALISLAFGVRYLFH). Topologically, residues 35 to 396 (NSNATDLQKI…WKNTPKVEQK (362 aa)) are lumenal. N-linked (GlcNAc...) asparagine glycosylation is present at Asn37.

This sequence belongs to the glycosyltransferase 32 family. In terms of assembly, component of the M-Pol II complex composed of ANP1, MNN9, MNN10, MNN11 and HOC1.

It is found in the golgi apparatus. Its subcellular location is the cis-Golgi network membrane. The M-Pol II complex possesses alpha-1,6-mannosyltransferase activity and is probably involved in the elongation of the mannan backbone of N-linked glycans on cell wall and periplasmic proteins. The polypeptide is Putative glycosyltransferase HOC1 (HOC1) (Saccharomyces cerevisiae (strain ATCC 204508 / S288c) (Baker's yeast)).